Consider the following 439-residue polypeptide: Probable cinnamyl alcohol dehydrogenase 8C (439 aa).

Cys-120 serves as a coordination point for Zn(2+). Thr-122 lines the NADP(+) pocket. Zn(2+) is bound by residues His-142, Glu-143, Cys-173, Cys-176, Cys-179, Cys-187, and Cys-239. NADP(+)-binding positions include Thr-243, 264–269, 287–292, Thr-327, Gly-351, and 374–376; these read GLGGLG, STSPGK, and NCV.

The protein belongs to the zinc-containing alcohol dehydrogenase family. In terms of assembly, homodimer. Zn(2+) serves as cofactor.

The enzyme catalyses (E)-cinnamyl alcohol + NADP(+) = (E)-cinnamaldehyde + NADPH + H(+). The catalysed reaction is (E)-coniferol + NADP(+) = (E)-coniferaldehyde + NADPH + H(+). It catalyses the reaction (E)-sinapyl alcohol + NADP(+) = (E)-sinapaldehyde + NADPH + H(+). It carries out the reaction (E)-4-coumaroyl alcohol + NADP(+) = (E)-4-coumaraldehyde + NADPH + H(+). The enzyme catalyses (E)-caffeyl alcohol + NADP(+) = (E)-caffeyl aldehyde + NADPH + H(+). It functions in the pathway aromatic compound metabolism; phenylpropanoid biosynthesis. In terms of biological role, involved in lignin biosynthesis. Catalyzes the final step specific for the production of lignin monomers. Catalyzes the NADPH-dependent reduction of coniferaldehyde, 5-hydroxyconiferaldehyde, sinapaldehyde, 4-coumaraldehyde and caffeyl aldehyde to their respective alcohols. The polypeptide is Probable cinnamyl alcohol dehydrogenase 8C (Oryza sativa subsp. japonica (Rice)).